A 296-amino-acid polypeptide reads, in one-letter code: Probable lipid kinase YegS-like (296 aa).

Positions 1-130 constitute a DAGKc domain; it reads MPHTLLILNG…IDLAQVNDKH (130 aa). ATP contacts are provided by residues threonine 37, 63–69, and threonine 92; that span reads GDGTINE. Positions 212, 215, and 217 each coordinate Mg(2+). Glutamate 268 (proton acceptor) is an active-site residue.

This sequence belongs to the diacylglycerol/lipid kinase family. YegS lipid kinase subfamily. Mg(2+) serves as cofactor. It depends on Ca(2+) as a cofactor.

The protein localises to the cytoplasm. Probably phosphorylates lipids; the in vivo substrate is unknown. In Yersinia enterocolitica serotype O:8 / biotype 1B (strain NCTC 13174 / 8081), this protein is Probable lipid kinase YegS-like.